The following is a 185-amino-acid chain: Lactoylglutathione lyase (185 aa).

Residues 1 to 22 (MASEARESPANNPGLSTNRDEA) form a disordered region. A VOC domain is found at 27–174 (IMQQTMFRIK…DGYWIEIFDL (148 aa)). Substrate-binding residues include Gln30 and Arg34. Residue Gln30 participates in Zn(2+) binding. Glu96 lines the Zn(2+) pocket. Substrate is bound by residues Asn100, Arg120, His124, and 154–155 (KM). His124 provides a ligand contact to Zn(2+). Glu170 provides a ligand contact to Zn(2+). The active-site Proton donor/acceptor is Glu170.

It belongs to the glyoxalase I family. The cofactor is Zn(2+).

The catalysed reaction is (R)-S-lactoylglutathione = methylglyoxal + glutathione. It functions in the pathway secondary metabolite metabolism; methylglyoxal degradation; (R)-lactate from methylglyoxal: step 1/2. Functionally, catalyzes the conversion of hemimercaptal, formed from methylglyoxal and glutathione, to S-lactoylglutathione. This chain is Lactoylglutathione lyase, found in Arabidopsis thaliana (Mouse-ear cress).